The sequence spans 602 residues: Elongation factor 4 (602 aa).

One can recognise a tr-type G domain in the interval 7–189; the sequence is SKIRNFCIIA…AIVRRVPPPQ (183 aa). GTP-binding positions include 19–24 and 136–139; these read DHGKST and NKVD.

Belongs to the TRAFAC class translation factor GTPase superfamily. Classic translation factor GTPase family. LepA subfamily.

Its subcellular location is the cell inner membrane. The enzyme catalyses GTP + H2O = GDP + phosphate + H(+). Its function is as follows. Required for accurate and efficient protein synthesis under certain stress conditions. May act as a fidelity factor of the translation reaction, by catalyzing a one-codon backward translocation of tRNAs on improperly translocated ribosomes. Back-translocation proceeds from a post-translocation (POST) complex to a pre-translocation (PRE) complex, thus giving elongation factor G a second chance to translocate the tRNAs correctly. Binds to ribosomes in a GTP-dependent manner. The chain is Elongation factor 4 from Prochlorococcus marinus (strain MIT 9301).